The sequence spans 245 residues: 2,3-bisphosphoglycerate-dependent phosphoglycerate mutase (245 aa).

Residues 9-16, 22-23, Arg-61, 88-91, Lys-99, 115-116, and 181-182 contribute to the substrate site; these read RHGESEWN, TG, ERHY, RR, and GN. Residue His-10 is the Tele-phosphohistidine intermediate of the active site. The active-site Proton donor/acceptor is Glu-88.

Belongs to the phosphoglycerate mutase family. BPG-dependent PGAM subfamily.

It carries out the reaction (2R)-2-phosphoglycerate = (2R)-3-phosphoglycerate. Its pathway is carbohydrate degradation; glycolysis; pyruvate from D-glyceraldehyde 3-phosphate: step 3/5. Catalyzes the interconversion of 2-phosphoglycerate and 3-phosphoglycerate. This is 2,3-bisphosphoglycerate-dependent phosphoglycerate mutase from Nocardia farcinica (strain IFM 10152).